A 166-amino-acid chain; its full sequence is Interleukin-3 (166 aa).

An N-terminal signal peptide occupies residues M1–Q26. N42 is a glycosylation site (N-linked (GlcNAc...) asparagine). 2 disulfide bridges follow: C43/C106 and C105/C166. N112 carries an N-linked (GlcNAc...) asparagine; partial glycan. The tract at residues L145 to C166 is disordered.

It belongs to the IL-3 family. Monomer. Activated T-cells, mast cells, natural killer cells.

It is found in the secreted. Cytokine secreted predominantly by activated T-lymphocytes as well as mast cells and osteoblastic cells that controls the production and differentiation of hematopoietic progenitor cells into lineage-restricted cells. Also stimulates mature basophils, eosinophils, and monocytes to become functionally activated. In addition, plays an important role in neural cell proliferation and survival. Participates as well in bone homeostasis and inhibits osteoclast differentiation by preventing NF-kappa-B nuclear translocation and activation. Mechanistically, exerts its biological effects through a receptor composed of IL3RA subunit and a signal transducing subunit IL3RB. Receptor stimulation results in the rapid activation of JAK2 kinase activity leading to STAT5-mediated transcriptional program. Alternatively, contributes to cell survival under oxidative stress in non-hematopoietic systems by activating pathways mediated by PI3K/AKT and ERK. The sequence is that of Interleukin-3 (Il3) from Mus musculus (Mouse).